The following is a 218-amino-acid chain: Adenylate kinase (218 aa).

10-15 (GAGKGT) is an ATP binding site. Positions 30–59 (STGDMIRETIKSGSALGQELKKVLDAGELV) are NMP. Residues Thr31, Arg36, 57–59 (ELV), and Gln92 contribute to the AMP site. An LID region spans residues 122 to 159 (GRRIHPASGRTYHTKFNPPKVADKDDVTGEPLITRTDD). Residues Arg123 and 132–133 (TY) contribute to the ATP site. The AMP site is built by Arg156 and Arg167. An ATP-binding site is contributed by Gln202.

Belongs to the adenylate kinase family. In terms of assembly, monomer.

The protein resides in the cytoplasm. The catalysed reaction is AMP + ATP = 2 ADP. It functions in the pathway purine metabolism; AMP biosynthesis via salvage pathway; AMP from ADP: step 1/1. Its function is as follows. Catalyzes the reversible transfer of the terminal phosphate group between ATP and AMP. Plays an important role in cellular energy homeostasis and in adenine nucleotide metabolism. This is Adenylate kinase from Francisella tularensis subsp. tularensis (strain FSC 198).